A 1400-amino-acid chain; its full sequence is MKDLLNFLKAQHKTEEFDAIKIGLSSPDMIRSWSFGEVKKPETINYRTFKPERDGLFCARIFGPVKDYECLCGKYKRLKHRGVICEKCGVEVTQTKVRRDRMGHIELASPVAHIWFLKSLPSRIGLLMDIPLRDIERVLYFEMYVVTEPGMTDLEKSQMLTEEEYLDRLEEWGDEFTAKMGAEAIKDLLGSMDLHAEVEQMREELDTTNSETKRKKLTKRLKLVEAFISSGNNPEWMILTVLPVLPPDLRPLVPLDGGRFATSDLNDLYRRVINRNNRLKRLLELAAPDIIVRNEKRMLQESVDALLDNGRRGRAITGSNKRPLKSLADMIKGKQGRFRQNLLGKRVDYSGRSVITVGPYLRLHQCGLPKKMALELFKPFIYSKLETRGLATTIKAAKKMVEREEAVVWDILDEVIREHPVLLNRAPTLHRLGIQAFEPVLIEGKAIQLHPLVCAAYNADFDGDQMAVHVPLTLEAQLEARTLMMSTNNILSPASGDPIIVPSQDVVLGLYYMTREMINAKGEGMYLAGPAEAEKAYRTKTAALHARVKVRITETVVDEDGHSTTETKMVDTTIGRAMLWQIVPKGLPFSIVNQKLGKKQISNLLNEAYRKLGLKDTVIFADQIMYTGFAYAALSGVSVGIDDMVVPPAKYTEIAEAEEEVREIQEQYQSGLVTAGERYNKVIDIWASTNDRVAKAMMENLSSETVINRDGEEEQQESFNSIYMMADSGARGSAAQIRQLAGMRGLMARPDGSIIETPITANFKEGLNVLQYFISTHGARKGLADTALKTANSGYLTRRLVDVAQDVVVTEHDCGTLEGVEMMPHIEGGDVKVALTELALGRVVAEDIVKPGTEEILIPRNTLLDEKWCQIINDNSVDKITVRSVVTCDSDFGCCAQCYGRDLARGHLVNQGEAVGVIAAQSIGEPGTQLTMRTFHIGGAASTAAAENSVQVKNNGSVKLNNAKFVINKDGKLVITSRASELTIIDEFGRTKEKHKLPYGSSLSKADGDAVTAGETVANWEAHTMPIITEVAGRVQFVDMIDGVTVSRQTDDLTGLSSSEVTDAAARPAAGKDMRPAIKLVDAAGNDVMIPGTDMPAQYFLPGKAIVNIEDGAEVGIGDTLARIPQKSGGNKDITGGLPRVADLFEARKPKEPAILAEYSGTVSFGKETKGKRRLIITREGGETYEEMIPKHRQLNVFEGERVERGDVIADGPEAPHDILRLRGIHAVTQYIANEVQEVYRLQGVKINDKHIETIVRQMLRKCTITHAGDSEFLPGETVEYSQVKIANRNLEAEGKEPARFERELLGITKASLATESFISAASFQETTRVLTEAAVSGKRDDLRGLKENVIVGRLIPAGTGFAYHQDRQAKRAQEQEGPSAAQATDNLAALLNAGFSSDE.

The Zn(2+) site is built by C70, C72, C85, and C88. Residues D460, D462, and D464 each coordinate Mg(2+). The Zn(2+) site is built by C814, C888, C895, and C898.

The protein belongs to the RNA polymerase beta' chain family. In terms of assembly, the RNAP catalytic core consists of 2 alpha, 1 beta, 1 beta' and 1 omega subunit. When a sigma factor is associated with the core the holoenzyme is formed, which can initiate transcription. Requires Mg(2+) as cofactor. It depends on Zn(2+) as a cofactor.

The catalysed reaction is RNA(n) + a ribonucleoside 5'-triphosphate = RNA(n+1) + diphosphate. In terms of biological role, DNA-dependent RNA polymerase catalyzes the transcription of DNA into RNA using the four ribonucleoside triphosphates as substrates. The sequence is that of DNA-directed RNA polymerase subunit beta' from Vibrio vulnificus (strain CMCP6).